Consider the following 261-residue polypeptide: 5'-nucleotidase SurE (261 aa).

A divalent metal cation is bound by residues aspartate 12, aspartate 13, serine 43, and asparagine 100.

The protein belongs to the SurE nucleotidase family. A divalent metal cation is required as a cofactor.

The protein localises to the cytoplasm. It catalyses the reaction a ribonucleoside 5'-phosphate + H2O = a ribonucleoside + phosphate. In terms of biological role, nucleotidase that shows phosphatase activity on nucleoside 5'-monophosphates. This chain is 5'-nucleotidase SurE, found in Protochlamydia amoebophila (strain UWE25).